Consider the following 1360-residue polypeptide: Probable inactive protein kinase DDB_G0270444 (1360 aa).

WD repeat units follow at residues 44–83 (SSKRPITFVIYDEEGNQFITGEDDFFIRLYNEDGTYIKQL), 109–152 (IRNI…AVYN), 166–205 (TTSAGITALTFDPTNLLVISGTSDGIVRKHSLRERVIMGT), and 208–247 (GHSRGAILNLLLTKHGHLLSSSMDRTIRLWDIDSGKQITG). The region spanning 636–954 (EKSIQTYLSN…IEQALSHPFI (319 aa)) is the Protein kinase domain. Over residues 959–979 (KQQQQQQQQKQQQQQQQQQQQ) the composition is skewed to low complexity. 3 disordered regions span residues 959–989 (KQQQQQQQQKQQQQQQQQQQQEIIPKDDSLT), 1258–1311 (IISE…VEEE), and 1331–1360 (EVEEEIEVEEEIEVEEEIQVEDDTDKSNDF). Coiled-coil stretches lie at residues 1014 to 1269 (SKIK…QEGE) and 1297 to 1352 (NASD…QVED). Positions 1291–1300 (LERDNKNASD) are enriched in basic and acidic residues. 2 stretches are compositionally biased toward acidic residues: residues 1301–1311 (HDDEQQFVEEE) and 1331–1354 (EVEEEIEVEEEIEVEEEIQVEDDT).

Belongs to the protein kinase superfamily. CMGC Ser/Thr protein kinase family.

The protein is Probable inactive protein kinase DDB_G0270444 of Dictyostelium discoideum (Social amoeba).